A 360-amino-acid chain; its full sequence is Phospho-N-acetylmuramoyl-pentapeptide-transferase (360 aa).

10 helical membrane passes run 27–47, 71–91, 93–113, 134–154, 168–188, 199–219, 239–259, 262–282, 288–308, and 337–357; these read GAFM…INVL, TPTM…LLWA, WDNP…LIGF, LALG…NHPA, TLIN…VGSA, GLAI…AYAV, ILIF…YNAP, AVFM…AIAV, LVLA…IIQV, and TIVI…LATL.

This sequence belongs to the glycosyltransferase 4 family. MraY subfamily. It depends on Mg(2+) as a cofactor.

It is found in the cell inner membrane. It catalyses the reaction UDP-N-acetyl-alpha-D-muramoyl-L-alanyl-gamma-D-glutamyl-meso-2,6-diaminopimeloyl-D-alanyl-D-alanine + di-trans,octa-cis-undecaprenyl phosphate = di-trans,octa-cis-undecaprenyl diphospho-N-acetyl-alpha-D-muramoyl-L-alanyl-D-glutamyl-meso-2,6-diaminopimeloyl-D-alanyl-D-alanine + UMP. It functions in the pathway cell wall biogenesis; peptidoglycan biosynthesis. In terms of biological role, catalyzes the initial step of the lipid cycle reactions in the biosynthesis of the cell wall peptidoglycan: transfers peptidoglycan precursor phospho-MurNAc-pentapeptide from UDP-MurNAc-pentapeptide onto the lipid carrier undecaprenyl phosphate, yielding undecaprenyl-pyrophosphoryl-MurNAc-pentapeptide, known as lipid I. This chain is Phospho-N-acetylmuramoyl-pentapeptide-transferase, found in Ruegeria pomeroyi (strain ATCC 700808 / DSM 15171 / DSS-3) (Silicibacter pomeroyi).